Here is a 901-residue protein sequence, read N- to C-terminus: Probable inorganic carbon transporter subunit DabA (901 aa).

Zn(2+) contacts are provided by C424, D426, H606, and C621.

This sequence belongs to the inorganic carbon transporter (TC 9.A.2) DabA family. As to quaternary structure, forms a complex with DabB. Requires Zn(2+) as cofactor.

The protein resides in the cell membrane. Its function is as follows. Part of an energy-coupled inorganic carbon pump. This is Probable inorganic carbon transporter subunit DabA from Staphylococcus aureus (strain Mu3 / ATCC 700698).